The following is a 103-amino-acid chain: UPF0145 protein PBPRB0184 (103 aa).

The protein belongs to the UPF0145 family.

The protein is UPF0145 protein PBPRB0184 of Photobacterium profundum (strain SS9).